The chain runs to 159 residues: Eukaryotic translation initiation factor 5A-2 (159 aa).

Residues 1–10 (MSDDEHHFEA) show a composition bias toward basic and acidic residues. Residues 1 to 25 (MSDDEHHFEASESGASKTYPQSAGN) form a disordered region. Serine 2 carries the post-translational modification Phosphoserine. The span at 13 to 24 (SGASKTYPQSAG) shows a compositional bias: polar residues. Hypusine is present on lysine 51.

Belongs to the eIF-5A family. In terms of assembly, homodimer. Interacts with AHK4 and AHP1. Cytokinin regulates the formation of the AHP1-AHK4-ELF5A-2 complex. Post-translationally, lys-51 undergoes hypusination, a unique post-translational modification that consists in the addition of a butylamino group from spermidine to lysine side chain, leading to the formation of the unusual amino acid hypusine. eIF-5As are the only known proteins to undergo this modification, which is essential for their function. As to expression, ubiquitous. In roots, expressed mostly inside the stele of the mature zone.

Its subcellular location is the cytoplasm. It is found in the nucleus. Functionally, translation factor that promotes translation elongation and termination, particularly upon ribosome stalling at specific amino acid sequence contexts. Binds between the exit (E) and peptidyl (P) site of the ribosome and promotes rescue of stalled ribosome: specifically required for efficient translation of polyproline-containing peptides as well as other motifs that stall the ribosome. Acts as a ribosome quality control (RQC) cofactor by joining the RQC complex to facilitate peptidyl transfer during CAT tailing step. Regulates cytokinin-mediated root protoxylem specification and represses secifically the expression of AHP6. Regulates the induction of programmed cell death caused by infection with virulent pathogen. This is Eukaryotic translation initiation factor 5A-2 (ELF5A-2) from Arabidopsis thaliana (Mouse-ear cress).